The following is a 250-amino-acid chain: 3alpha-hydroxysteroid dehydrogenase (250 aa).

Residues Asn-93, Tyr-158, and Lys-162 each contribute to the NADP(+) site. The active-site Proton acceptor is the Tyr-158.

The protein belongs to the short-chain dehydrogenases/reductases (SDR) family.

The enzyme catalyses lithocholate + NADP(+) = 3-oxo-5beta-cholan-24-oate + NADPH + H(+). It catalyses the reaction deoxycholate + NADP(+) = 12alpha-hydroxy-3-oxo-5beta-cholan-24-oate + NADPH + H(+). The catalysed reaction is deoxycholate + NAD(+) = 12alpha-hydroxy-3-oxo-5beta-cholan-24-oate + NADH + H(+). It carries out the reaction cholate + NADP(+) = 7alpha,12alpha-dihydroxy-3-oxo-5beta-cholan-24-oate + NADPH + H(+). The enzyme catalyses chenodeoxycholate + NADP(+) = 3-oxochenodeoxycholate + NADPH + H(+). Functionally, involved in the modification of secondary bile acids into iso-bile acids (3beta-bile acids) via epimerization of the 3-OH group through a 3-oxo-intermediate. Catalyzes the oxidation of deoxycholate (DCA) and lithocholate (LCA) to yield 12-alpha-hydroxy-3-oxo-5-beta-cholan-24-oate (3-oxo-DCA) and 3-oxo-5-beta-cholan-24-oate (3-oxo-LCA), respectively. Is also able to catalyze the oxidation of cholate (CA) and chenodeoxycholate (CDCA) into 3-dehydrocholate (3-oxo-CA) and 7-alpha-hydroxy-3-oxo-5-beta-cholan-24-oate (3-oxo-CDCA), respectively. Can also catalyze the reverse reactions in vitro. Accepts both NADPH and NADH as cosubstrates. The conversion of the abundant bile acid DCA into isoDCA by the gut bacterium R.gnavus favors the growth of the keystone commensal genus Bacteroides, since isoDCA is less cytotoxic than its parent compound, DCA; iso-bile acids have thus a potential role in modulating gut community composition. The protein is 3alpha-hydroxysteroid dehydrogenase of Mediterraneibacter gnavus (strain ATCC 29149 / DSM 114966 / JCM 6515 / VPI C7-9) (Ruminococcus gnavus).